Here is a 992-residue protein sequence, read N- to C-terminus: Disks large-associated protein 1 (992 aa).

Disordered regions lie at residues 150–209 (TKSH…SWWS) and 355–376 (KAMG…PKVA). Serine 169 carries the post-translational modification Phosphoserine. A compositionally biased stretch (low complexity) spans 194 to 209 (RSNASNASPTSPSWWS). Phosphoserine is present on residues serine 362, serine 365, serine 368, serine 372, serine 389, serine 418, serine 421, serine 425, serine 428, serine 437, serine 509, serine 516, and serine 578. Phosphothreonine is present on threonine 579. A phosphoserine mark is found at serine 581 and serine 605. Threonine 606 carries the phosphothreonine modification. A phosphoserine mark is found at serine 608 and serine 611. Interaction with DYL2 regions lie at residues 665–676 (LSIGIQVDDAEE) and 687–698 (NKFQSVGVQVEE). Residues 914-980 (WKQMDPLDKK…QNSATESAES (67 aa)) are disordered. Basic and acidic residues-rich tracts occupy residues 918-927 (DPLDKKERRA) and 943-958 (IRER…EARK). A Phosphoserine modification is found at serine 947. Residues 969 to 978 (VRQNSATESA) show a composition bias toward polar residues. The short motif at 990–992 (TRL) is the PDZ-binding element.

Belongs to the SAPAP family. Interacts with the guanylate kinase-like domain of DLG1, DLG2, DLG3, DLG4 and AIP1. Interacts with the PDZ domain of SHANK1, SHANK2 and SHANK3. Found in a complex with DLG4 and SHANK1, SHANK2 or SHANK3. Found in a complex with DLG4 and BEGAIN. Interacts with DYL2 and LRFN1. Interacts with MPP2 (via the SH3-Guanylate kinase-like sub-module). Ubiquitinated by TRIM3; leading to proteasomal degradation. As to expression, highest levels in the neocortex, part of the hippocampus, the granule cell layer of the cerebellum, the glomerular layer of the olfactory bulb, the inner plexiform layer of the retina, the ventral and dorsal horn of the spinal cord, the neuromuscular junction and the submandibular ganglion.

The protein localises to the cell membrane. Its subcellular location is the postsynaptic density. It is found in the synapse. Its function is as follows. Part of the postsynaptic scaffold in neuronal cells. This is Disks large-associated protein 1 (Dlgap1) from Mus musculus (Mouse).